A 62-amino-acid polypeptide reads, in one-letter code: Photosystem II reaction center protein Z (62 aa).

The next 2 helical transmembrane spans lie at 8 to 28 (FLIALVLFSLLMVIGVPVAYA) and 41 to 61 (YVGSAIWAILVVAVAILNFLV).

Belongs to the PsbZ family. PSII is composed of 1 copy each of membrane proteins PsbA, PsbB, PsbC, PsbD, PsbE, PsbF, PsbH, PsbI, PsbJ, PsbK, PsbL, PsbM, PsbT, PsbX, PsbY, PsbZ, Psb30/Ycf12, peripheral proteins PsbO, CyanoQ (PsbQ), PsbU, PsbV and a large number of cofactors. It forms dimeric complexes.

The protein localises to the cellular thylakoid membrane. Its function is as follows. May control the interaction of photosystem II (PSII) cores with the light-harvesting antenna, regulates electron flow through the 2 photosystem reaction centers. PSII is a light-driven water plastoquinone oxidoreductase, using light energy to abstract electrons from H(2)O, generating a proton gradient subsequently used for ATP formation. The protein is Photosystem II reaction center protein Z of Microcystis aeruginosa (strain NIES-843 / IAM M-2473).